Reading from the N-terminus, the 529-residue chain is Nucleolar protein 58 (529 aa).

The residue at position 34 (T34) is a Phosphothreonine. S109 bears the Phosphoserine mark. Residues 155–400 (ADKVDTMIVQ…LEARLRTLED (246 aa)) form a sufficient for interaction with NOPCHAP1 region. K157 is covalently cross-linked (Glycyl lysine isopeptide (Lys-Gly) (interchain with G-Cter in SUMO2)). Residues 282 to 400 (IAPNVTVMVG…LEARLRTLED (119 aa)) enclose the Nop domain. Phosphoserine is present on residues S304 and S351. Glycyl lysine isopeptide (Lys-Gly) (interchain with G-Cter in SUMO2) cross-links involve residues K353, K411, K415, K422, K426, K441, K444, and K465. The disordered stretch occupies residues 409 to 529 (TGKALAKTEK…KKKKKRENED (121 aa)). Over residues 414–427 (AKTEKYEHKSEVKT) the composition is skewed to basic and acidic residues. K467 is covalently cross-linked (Glycyl lysine isopeptide (Lys-Gly) (interchain with G-Cter in SUMO); alternate). A Glycyl lysine isopeptide (Lys-Gly) (interchain with G-Cter in SUMO1); alternate cross-link involves residue K467. K467 is covalently cross-linked (Glycyl lysine isopeptide (Lys-Gly) (interchain with G-Cter in SUMO2); alternate). A compositionally biased stretch (acidic residues) spans 469–481 (EEEEEEKVAEEEE). At S483 the chain carries Phosphoserine. K485 participates in a covalent cross-link: Glycyl lysine isopeptide (Lys-Gly) (interchain with G-Cter in SUMO2). Over residues 485 to 495 (KKKKKRGKKKH) the composition is skewed to basic residues. Residue K497 forms a Glycyl lysine isopeptide (Lys-Gly) (interchain with G-Cter in SUMO); alternate linkage. K497 is covalently cross-linked (Glycyl lysine isopeptide (Lys-Gly) (interchain with G-Cter in SUMO2); alternate). S502 and S514 each carry phosphoserine. Residues 517–529 (KKKKKKKKRENED) are compositionally biased toward basic residues.

Belongs to the NOP5/NOP56 family. In terms of assembly, core component of box C/D small nucleolar ribonucleoprotein (snoRNP) particles; the core proteins SNU13, NOP56, NOP58 and FBL or FBLL1 assemble stepwise onto the snoRNA. Interacts with NOLC1/Nopp140. Interacts with NOPCHAP1, NUFIP1, RUVBL1 and RUVBL2; NOPCHAP1 bridges the association of NOP58 with RUVBL1:RUVBL2 and NUFIP1. Interacts with PIH1D1. Part of the small subunit (SSU) processome, composed of more than 70 proteins and the RNA chaperone small nucleolar RNA (snoRNA) U3. Sumoylation is essential for high-affinity binding to snoRNAs. In terms of tissue distribution, ubiquitous.

The protein localises to the nucleus. The protein resides in the nucleolus. It localises to the nucleoplasm. In terms of biological role, required for the biogenesis of box C/D snoRNAs such as U3, U8 and U14 snoRNAs. Part of the small subunit (SSU) processome, first precursor of the small eukaryotic ribosomal subunit. During the assembly of the SSU processome in the nucleolus, many ribosome biogenesis factors, an RNA chaperone and ribosomal proteins associate with the nascent pre-rRNA and work in concert to generate RNA folding, modifications, rearrangements and cleavage as well as targeted degradation of pre-ribosomal RNA by the RNA exosome. Core component of box C/D small nucleolar ribonucleoprotein (snoRNP) complexes that function in methylation of multiple sites on ribosomal RNAs (rRNAs) and messenger RNAs (mRNAs). The chain is Nucleolar protein 58 from Homo sapiens (Human).